The primary structure comprises 197 residues: Guanylate kinase (197 aa).

The 179-residue stretch at 7-185 folds into the Guanylate kinase-like domain; it reads GLIIILSSPS…TLKKIHEIIV (179 aa). 14-21 is an ATP binding site; it reads SPSGTGKS.

The protein belongs to the guanylate kinase family.

Its subcellular location is the cytoplasm. It catalyses the reaction GMP + ATP = GDP + ADP. Its function is as follows. Essential for recycling GMP and indirectly, cGMP. This chain is Guanylate kinase, found in Rickettsia typhi (strain ATCC VR-144 / Wilmington).